The following is a 739-amino-acid chain: Exocyst complex component 3-like protein (739 aa).

The mediates interaction with EXOC2, EXOC4 and EXOC5 stretch occupies residues 1 to 370 (MDSAARDKTQ…DVSDLEPLLT (370 aa)).

Belongs to the SEC6 family. In terms of assembly, interacts with EXOC2, EXOC4 and EXOC5; may be part of the exocyst.

It localises to the cytoplasmic vesicle. The protein resides in the secretory vesicle. As part of the exocyst, may play a role in regulated exocytosis of insulin granules. The sequence is that of Exocyst complex component 3-like protein (EXOC3L1) from Bos taurus (Bovine).